The following is a 469-amino-acid chain: MKSSVEQLNPTRVRINVEVPFTELEPDFQRAYKELARHVQLPGFRPGKVPARLLEARFGRETLLDQVVNEAMPSRYGQALAESEVQPIGQPEIEVIRKEYGQDLAFTVEVEVRPKIALPDFSTLKVVVDPVEVSTDDVEAELRSLRARFGTLIGVDRPVALGDFVSIDLSATINGEKVPNADAEGLSHEVGYGRLIAGLDDALVGLSAGESRVFTTQLATSKHAGQDAEVIVTVKSVKERELPEPDDEFAQLVSEFDTMAELRANLGDQVRKAKYAQQAEKIRDAAVDALLERVDVPLPEGIVQAQFNNALHDALSGLGHDEAKFAEVLAERGSSREEFEAEARSAAERDVTRQLLLDVVADDQKIQVGQDDLNERLLATSQQYGVDAQQLFGFLRENNRLSSLVTDARRRLAVAAVVEAATFTDSDGNTIDTSEFFGKHAQSDKADQKTEEADPNSDAIDEEVDEAAE.

The 82-residue stretch at 162–243 folds into the PPIase FKBP-type domain; it reads GDFVSIDLSA…VKSVKERELP (82 aa). Positions 429–469 are disordered; the sequence is NTIDTSEFFGKHAQSDKADQKTEEADPNSDAIDEEVDEAAE. Positions 437–452 are enriched in basic and acidic residues; that stretch reads FGKHAQSDKADQKTEE. Positions 453–469 are enriched in acidic residues; it reads ADPNSDAIDEEVDEAAE.

Belongs to the FKBP-type PPIase family. Tig subfamily.

Its subcellular location is the cytoplasm. The catalysed reaction is [protein]-peptidylproline (omega=180) = [protein]-peptidylproline (omega=0). Its function is as follows. Involved in protein export. Acts as a chaperone by maintaining the newly synthesized protein in an open conformation. Functions as a peptidyl-prolyl cis-trans isomerase. The chain is Trigger factor from Mycobacterium leprae (strain Br4923).